Consider the following 295-residue polypeptide: Bifunctional protein FolD (295 aa).

Residues 165 to 167, Ser190, and Ile231 contribute to the NADP(+) site; that span reads GRS.

The protein belongs to the tetrahydrofolate dehydrogenase/cyclohydrolase family. As to quaternary structure, homodimer.

The enzyme catalyses (6R)-5,10-methylene-5,6,7,8-tetrahydrofolate + NADP(+) = (6R)-5,10-methenyltetrahydrofolate + NADPH. The catalysed reaction is (6R)-5,10-methenyltetrahydrofolate + H2O = (6R)-10-formyltetrahydrofolate + H(+). Its pathway is one-carbon metabolism; tetrahydrofolate interconversion. Catalyzes the oxidation of 5,10-methylenetetrahydrofolate to 5,10-methenyltetrahydrofolate and then the hydrolysis of 5,10-methenyltetrahydrofolate to 10-formyltetrahydrofolate. The protein is Bifunctional protein FolD of Nitrosomonas eutropha (strain DSM 101675 / C91 / Nm57).